The following is a 264-amino-acid chain: Thymidylate synthase (264 aa).

Residue Arg-21 coordinates dUMP. His-51 serves as a coordination point for (6R)-5,10-methylene-5,6,7,8-tetrahydrofolate. Position 126–127 (126–127 (RR)) interacts with dUMP. Cys-146 functions as the Nucleophile in the catalytic mechanism. DUMP-binding positions include 166–169 (RSAD), Asn-177, and 207–209 (HLY). A (6R)-5,10-methylene-5,6,7,8-tetrahydrofolate-binding site is contributed by Asp-169. (6R)-5,10-methylene-5,6,7,8-tetrahydrofolate is bound at residue Ala-263.

This sequence belongs to the thymidylate synthase family. Bacterial-type ThyA subfamily. In terms of assembly, homodimer.

The protein localises to the cytoplasm. The catalysed reaction is dUMP + (6R)-5,10-methylene-5,6,7,8-tetrahydrofolate = 7,8-dihydrofolate + dTMP. Its pathway is pyrimidine metabolism; dTTP biosynthesis. Catalyzes the reductive methylation of 2'-deoxyuridine-5'-monophosphate (dUMP) to 2'-deoxythymidine-5'-monophosphate (dTMP) while utilizing 5,10-methylenetetrahydrofolate (mTHF) as the methyl donor and reductant in the reaction, yielding dihydrofolate (DHF) as a by-product. This enzymatic reaction provides an intracellular de novo source of dTMP, an essential precursor for DNA biosynthesis. This chain is Thymidylate synthase, found in Thiobacillus denitrificans (strain ATCC 25259 / T1).